The chain runs to 375 residues: uncharacterized protein (375 aa).

It belongs to the IMPDH/GMPR family.

This is an uncharacterized protein from Mycobacterium leprae (strain TN).